The sequence spans 1040 residues: Multidrug resistance protein MdtB (1040 aa).

The next 12 helical transmembrane spans lie at leucine 25–alanine 45, leucine 347–alanine 367, isoleucine 369–leucine 389, leucine 396–isoleucine 416, isoleucine 440–phenylalanine 460, phenylalanine 472–proline 492, tryptophan 537–isoleucine 557, leucine 863–valine 883, phenylalanine 888–alanine 908, isoleucine 910–isoleucine 930, isoleucine 968–valine 988, and isoleucine 998–isoleucine 1018.

Belongs to the resistance-nodulation-cell division (RND) (TC 2.A.6) family. MdtB subfamily. In terms of assembly, part of a tripartite efflux system composed of MdtA, MdtB and MdtC. MdtB forms a heteromultimer with MdtC.

The protein resides in the cell inner membrane. This is Multidrug resistance protein MdtB from Salmonella newport (strain SL254).